The sequence spans 525 residues: GMP synthase [glutamine-hydrolyzing] (525 aa).

Residues 9 to 207 enclose the Glutamine amidotransferase type-1 domain; the sequence is RILILDFGSQ…ILDICGCEAL (199 aa). Cysteine 86 serves as the catalytic Nucleophile. Active-site residues include histidine 181 and glutamate 183. The GMPS ATP-PPase domain maps to 208 to 400; sequence WTPSKIAEDA…LGLPYDMVYR (193 aa). Residue 235-241 participates in ATP binding; the sequence is SGGVDSS.

As to quaternary structure, homodimer.

The catalysed reaction is XMP + L-glutamine + ATP + H2O = GMP + L-glutamate + AMP + diphosphate + 2 H(+). It functions in the pathway purine metabolism; GMP biosynthesis; GMP from XMP (L-Gln route): step 1/1. Catalyzes the synthesis of GMP from XMP. In Pseudomonas savastanoi pv. phaseolicola (strain 1448A / Race 6) (Pseudomonas syringae pv. phaseolicola (strain 1448A / Race 6)), this protein is GMP synthase [glutamine-hydrolyzing].